The sequence spans 592 residues: Isocitrate dehydrogenase kinase/phosphatase 1 (592 aa).

ATP is bound by residues 337 to 343 (APGTPGM) and K358. D393 is a catalytic residue.

The protein belongs to the AceK family.

The protein resides in the cytoplasm. The catalysed reaction is L-seryl-[isocitrate dehydrogenase] + ATP = O-phospho-L-seryl-[isocitrate dehydrogenase] + ADP + H(+). Its function is as follows. Bifunctional enzyme which can phosphorylate or dephosphorylate isocitrate dehydrogenase (IDH) on a specific serine residue. This is a regulatory mechanism which enables bacteria to bypass the Krebs cycle via the glyoxylate shunt in response to the source of carbon. When bacteria are grown on glucose, IDH is fully active and unphosphorylated, but when grown on acetate or ethanol, the activity of IDH declines drastically concomitant with its phosphorylation. In Pseudoalteromonas translucida (strain TAC 125), this protein is Isocitrate dehydrogenase kinase/phosphatase 1.